The sequence spans 476 residues: Proline--tRNA ligase 2 (476 aa).

Belongs to the class-II aminoacyl-tRNA synthetase family. ProS type 3 subfamily. Homodimer.

The protein resides in the cytoplasm. The catalysed reaction is tRNA(Pro) + L-proline + ATP = L-prolyl-tRNA(Pro) + AMP + diphosphate. Functionally, catalyzes the attachment of proline to tRNA(Pro) in a two-step reaction: proline is first activated by ATP to form Pro-AMP and then transferred to the acceptor end of tRNA(Pro). This Bacillus cereus (strain ATCC 14579 / DSM 31 / CCUG 7414 / JCM 2152 / NBRC 15305 / NCIMB 9373 / NCTC 2599 / NRRL B-3711) protein is Proline--tRNA ligase 2.